The sequence spans 446 residues: Argininosuccinate synthase (446 aa).

Residues 17 to 25 and A43 each bind ATP; that span reads AFSGGLDTS. Position 99 (Y99) interacts with L-citrulline. G129 and T131 together coordinate ATP. The L-aspartate site is built by T131, N135, and D136. N135 provides a ligand contact to L-citrulline. D136 contributes to the ATP binding site. The L-citrulline site is built by R139 and S192. D194 is an ATP binding site. Residues T201, E203, and E280 each coordinate L-citrulline.

It belongs to the argininosuccinate synthase family. Type 2 subfamily. As to quaternary structure, homotetramer.

Its subcellular location is the cytoplasm. The enzyme catalyses L-citrulline + L-aspartate + ATP = 2-(N(omega)-L-arginino)succinate + AMP + diphosphate + H(+). Its pathway is amino-acid biosynthesis; L-arginine biosynthesis; L-arginine from L-ornithine and carbamoyl phosphate: step 2/3. The sequence is that of Argininosuccinate synthase from Burkholderia thailandensis (strain ATCC 700388 / DSM 13276 / CCUG 48851 / CIP 106301 / E264).